Consider the following 470-residue polypeptide: Uronate isomerase (470 aa).

Belongs to the metallo-dependent hydrolases superfamily. Uronate isomerase family.

It catalyses the reaction D-glucuronate = D-fructuronate. The catalysed reaction is aldehydo-D-galacturonate = keto-D-tagaturonate. Its pathway is carbohydrate metabolism; pentose and glucuronate interconversion. The sequence is that of Uronate isomerase from Cronobacter sakazakii (strain ATCC BAA-894) (Enterobacter sakazakii).